We begin with the raw amino-acid sequence, 782 residues long: LINE-1 type transposase domain-containing protein 1 (782 aa).

Disordered regions lie at residues 1–30 (MSGVQSKAARLQKERKEKLSADRERKTATS), 90–200 (QEGD…GGAG), and 338–397 (NKGT…SAEE). Basic and acidic residues-rich tracts occupy residues 11 to 27 (LQKERKEKLSADRERKT) and 95 to 107 (ISERPKPGEKVEE). The residue at position 136 (Ser-136) is a Phosphoserine. Basic and acidic residues-rich tracts occupy residues 143 to 158 (SLERGGEALRGEHGRC) and 183 to 194 (EENRLKAPKESP). A compositionally biased stretch (acidic residues) spans 347–396 (GEEEEISETQGEETSEGETSELGEEEGSESEEEEESSESEEEEESSESAE). 7 positions are modified to phosphoserine: Ser-407, Ser-409, Ser-442, Ser-478, Ser-490, Ser-559, and Ser-567.

This sequence belongs to the transposase 22 family.

The sequence is that of LINE-1 type transposase domain-containing protein 1 (L1td1) from Mus musculus (Mouse).